The sequence spans 1237 residues: U3 small nucleolar RNA-associated protein 22 (1237 aa).

The segment at 1-78 is disordered; it reads MATSVKRKAS…TNTAATRHNG (78 aa). Residues S10 and S58 each carry the phosphoserine modification. T60 carries the phosphothreonine modification. The segment covering 61 to 78 has biased composition (polar residues); sequence SPESNEVATNTAATRHNG. S64 carries the post-translational modification Phosphoserine.

It belongs to the NRAP family. In terms of assembly, interacts with snoRNA U3. Interacts with MPP10. Component of the ribosomal small subunit (SSU) processome composed of at least 40 protein subunits and snoRNA U3. Interacts with UBP10.

Its subcellular location is the nucleus. It localises to the nucleolus. In terms of biological role, involved in nucleolar processing of pre-18S ribosomal RNA and ribosome assembly. This Saccharomyces cerevisiae (strain ATCC 204508 / S288c) (Baker's yeast) protein is U3 small nucleolar RNA-associated protein 22 (UTP22).